The chain runs to 153 residues: ORM1-like protein 2 (153 aa).

Topologically, residues 1 to 21 (MNVGVAHSEVNPNTRVMNSRG) are cytoplasmic. The next 2 membrane-spanning stretches (helical) occupy residues 22-42 (IWLA…SIPF) and 43-63 (FSIP…MYIF). Over 64-105 (LHTVKGTPFETPDQGKARLLTHWEQMDYGLQFTSSRKFLSIS) the chain is Cytoplasmic. A helical membrane pass occupies residues 106-126 (PIVLYLLASFYTKYDAAHFLI). The Extracellular portion of the chain corresponds to 127-153 (NTASLLSVLLPKLPQFHGVRLFGINKY).

It belongs to the ORM family. Ceramide-sensitive subunit of the serine palmitoyltransferase (SPT) complex, which is also composed of SPTLC1, SPTLC2/3 and SPTSSA/B.

Its subcellular location is the endoplasmic reticulum membrane. In terms of biological role, plays an essential role in the homeostatic regulation of sphingolipid de novo biosynthesis by modulating the activity of the serine palmitoyltransferase (SPT) in response to ceramide levels. When complexed to SPT, the binding of ceramides to its N-terminus stabilizes a conformation that block SPT substrate entry, hence preventing SPT catalytic activity. Through this mechanism, maintains ceramide levels at sufficient concentrations for the production of complex sphingolipids, but which prevents the accumulation of ceramides to levels that trigger apoptosis. The sequence is that of ORM1-like protein 2 (Ormdl2) from Mus musculus (Mouse).